Reading from the N-terminus, the 323-residue chain is NADH-ubiquinone oxidoreductase chain 1 (323 aa).

The next 9 helical transmembrane spans lie at 10-30 (LLYI…GLLI), 52-72 (PNVV…KLVL), 84-104 (IIYA…WSVI), 119-139 (VIFI…AGWA), 157-177 (VSYE…AGTV), 189-209 (VWFI…ALAE), 245-265 (YANI…GIVS), 268-288 (ISGA…RATL), and 302-322 (KSLL…VLII).

It belongs to the complex I subunit 1 family.

It is found in the mitochondrion inner membrane. It catalyses the reaction a ubiquinone + NADH + 5 H(+)(in) = a ubiquinol + NAD(+) + 4 H(+)(out). Its function is as follows. Core subunit of the mitochondrial membrane respiratory chain NADH dehydrogenase (Complex I) that is believed to belong to the minimal assembly required for catalysis. Complex I functions in the transfer of electrons from NADH to the respiratory chain. The immediate electron acceptor for the enzyme is believed to be ubiquinone. This chain is NADH-ubiquinone oxidoreductase chain 1 (nad1), found in Dictyostelium citrinum (Slime mold).